Here is a 249-residue protein sequence, read N- to C-terminus: Probable transcriptional regulatory protein LBJ_0543 (249 aa).

This sequence belongs to the TACO1 family.

It is found in the cytoplasm. The polypeptide is Probable transcriptional regulatory protein LBJ_0543 (Leptospira borgpetersenii serovar Hardjo-bovis (strain JB197)).